A 310-amino-acid chain; its full sequence is MPLRLIFMGTPEFAVPTLLQLIAHGHEIAAVYTREARPAGRGMKLQPSPVAREAHRLGIPVLTPKTLKTPAALDEFRSHGADAAVVVAYGMILPQAILDAPPLGCFNLHGSLLPRWRGAAPINRAIMAGDAETGVMVMKMDAGLDTGDVAMAERIAVTDAMTASDLHDALALLGADLMARAMAALARGGLQLTKQSEHGVTYAAKIDKAEARIDWSRPARDVLRHIHGLSPFPGAWCEMLVDGEQVRVKILRCGVVKGPGEPGELLDDRLTIACKDGAIRVLELQRAGKPPMKADAFLNGTPLKPPMRFA.

111–114 (SLLP) lines the (6S)-5,6,7,8-tetrahydrofolate pocket.

Belongs to the Fmt family.

The catalysed reaction is L-methionyl-tRNA(fMet) + (6R)-10-formyltetrahydrofolate = N-formyl-L-methionyl-tRNA(fMet) + (6S)-5,6,7,8-tetrahydrofolate + H(+). In terms of biological role, attaches a formyl group to the free amino group of methionyl-tRNA(fMet). The formyl group appears to play a dual role in the initiator identity of N-formylmethionyl-tRNA by promoting its recognition by IF2 and preventing the misappropriation of this tRNA by the elongation apparatus. The polypeptide is Methionyl-tRNA formyltransferase (Nitrobacter hamburgensis (strain DSM 10229 / NCIMB 13809 / X14)).